A 665-amino-acid chain; its full sequence is Succinate dehydrogenase [ubiquinone] flavoprotein subunit A, mitochondrial (665 aa).

A mitochondrion-targeting transit peptide spans 1-45 (MALLKVAPSRLLSRALQLASRVQNCTPTVTTARRNFHFTVYGRKD). Residues alanine 72, alanine 75, threonine 94, lysine 95, and serine 101 each contribute to the FAD site. At histidine 102 the chain carries Tele-8alpha-FAD histidine. Positions 103, 108, 224, and 278 each coordinate FAD. Oxaloacetate is bound by residues histidine 299, arginine 343, and histidine 410. The active-site Proton acceptor is the arginine 343. Residue glutamate 443 participates in FAD binding. Arginine 454 and alanine 457 together coordinate oxaloacetate. 2 residues coordinate FAD: serine 459 and leucine 460.

It belongs to the FAD-dependent oxidoreductase 2 family. FRD/SDH subfamily. Component of complex II composed of four subunits: a flavoprotein (FP), an iron-sulfur protein (IP), and a cytochrome b composed of a large and a small subunit. Requires FAD as cofactor.

It localises to the mitochondrion inner membrane. It catalyses the reaction a ubiquinone + succinate = a ubiquinol + fumarate. It carries out the reaction (R)-malate + a quinone = enol-oxaloacetate + a quinol. The catalysed reaction is (S)-malate + a quinone = enol-oxaloacetate + a quinol. It participates in carbohydrate metabolism; tricarboxylic acid cycle; fumarate from succinate (eukaryal route): step 1/1. Its activity is regulated as follows. Enol-oxaloacetate inhibits the succinate dehydrogenase activity. In terms of biological role, flavoprotein (FP) subunit of succinate dehydrogenase (SDH) that is involved in complex II of the mitochondrial electron transport chain and is responsible for transferring electrons from succinate to ubiquinone (coenzyme Q). SDH also oxidizes malate to the non-canonical enol form of oxaloacetate, enol-oxaloacetate. Enol-oxaloacetate, which is a potent inhibitor of the succinate dehydrogenase activity, is further isomerized into keto-oxaloacetate. This Xenopus laevis (African clawed frog) protein is Succinate dehydrogenase [ubiquinone] flavoprotein subunit A, mitochondrial (sdha-a).